Here is a 748-residue protein sequence, read N- to C-terminus: Photosystem I P700 chlorophyll a apoprotein A1 (748 aa).

8 consecutive transmembrane segments (helical) span residues 70–93, 156–179, 195–219, 291–309, 346–369, 385–411, 433–455, and 530–548; these read VFSAHFGQIAVILIWLSGMYFHGA, LYSTAIGGLVLATLTLIGGWYHYH, LNHHLAGLIGLGSLSWAGHQIHVSL, TAHHHLAIAVLFIIAGHQY, WHAQLALNLALFGSLTIIVAHHMY, LSLFTHHMWIGGFLVTGAAAHAAIFLV, AIISHLNWVCIFLGFHSFGLYIH, and FLVHHIHAFTIHVTVLILL. [4Fe-4S] cluster contacts are provided by Cys572 and Cys581. 2 consecutive transmembrane segments (helical) span residues 588–609 and 662–684; these read HVFLGLFWMYNSISVVIFHFSW and LSAYGLIFLGAHFVWAFSLMFLF. Residue His673 participates in chlorophyll a' binding. Chlorophyll a is bound by residues Met681 and Tyr689. Trp690 contributes to the phylloquinone binding site. A helical membrane pass occupies residues 722 to 742; that stretch reads AVGVAHYLLGGIATTWAFFLA.

Belongs to the PsaA/PsaB family. As to quaternary structure, the PsaA/B heterodimer binds the P700 chlorophyll special pair and subsequent electron acceptors. PSI consists of a core antenna complex that captures photons, and an electron transfer chain that converts photonic excitation into a charge separation. The eukaryotic PSI reaction center is composed of at least 11 subunits. P700 is a chlorophyll a/chlorophyll a' dimer, A0 is one or more chlorophyll a, A1 is one or both phylloquinones and FX is a shared 4Fe-4S iron-sulfur center. serves as cofactor.

Its subcellular location is the plastid. It is found in the chloroplast thylakoid membrane. The catalysed reaction is reduced [plastocyanin] + hnu + oxidized [2Fe-2S]-[ferredoxin] = oxidized [plastocyanin] + reduced [2Fe-2S]-[ferredoxin]. In terms of biological role, psaA and PsaB bind P700, the primary electron donor of photosystem I (PSI), as well as the electron acceptors A0, A1 and FX. PSI is a plastocyanin-ferredoxin oxidoreductase, converting photonic excitation into a charge separation, which transfers an electron from the donor P700 chlorophyll pair to the spectroscopically characterized acceptors A0, A1, FX, FA and FB in turn. Oxidized P700 is reduced on the lumenal side of the thylakoid membrane by plastocyanin. The chain is Photosystem I P700 chlorophyll a apoprotein A1 from Chaetosphaeridium globosum (Charophycean green alga).